The sequence spans 548 residues: Folylpolyglutamate synthase (548 aa).

130 to 133 serves as a coordination point for ATP; it reads GKGS. Mg(2+) contacts are provided by Ser-157, Glu-234, and His-262. ATP is bound by residues Arg-382 and Asp-396.

Belongs to the folylpolyglutamate synthase family. It depends on a monovalent cation as a cofactor.

The protein resides in the mitochondrion inner membrane. The protein localises to the mitochondrion matrix. It is found in the cytoplasm. It catalyses the reaction (6S)-5,6,7,8-tetrahydrofolyl-(gamma-L-Glu)(n) + L-glutamate + ATP = (6S)-5,6,7,8-tetrahydrofolyl-(gamma-L-Glu)(n+1) + ADP + phosphate + H(+). Its pathway is cofactor biosynthesis; tetrahydrofolylpolyglutamate biosynthesis. Functionally, catalyzes conversion of folates to polyglutamate derivatives allowing concentration of folate compounds in the cell and the intracellular retention of these cofactors, which are important substrates for most of the folate-dependent enzymes that are involved in one-carbon transfer reactions involved in purine, pyrimidine and amino acid synthesis. Required for methionine synthesis and maintenance of intact mitochondrial DNA. Involved in telomere maintenance. The chain is Folylpolyglutamate synthase from Saccharomyces cerevisiae (strain FostersO) (Baker's yeast).